A 157-amino-acid chain; its full sequence is uncharacterized protein (157 aa).

This is an uncharacterized protein from Saccharomyces cerevisiae (strain ATCC 204508 / S288c) (Baker's yeast).